A 119-amino-acid chain; its full sequence is Large ribosomal subunit protein bL20 (119 aa).

The protein belongs to the bacterial ribosomal protein bL20 family.

Binds directly to 23S ribosomal RNA and is necessary for the in vitro assembly process of the 50S ribosomal subunit. It is not involved in the protein synthesizing functions of that subunit. This is Large ribosomal subunit protein bL20 from Burkholderia cenocepacia (strain HI2424).